Reading from the N-terminus, the 419-residue chain is Gamma-glutamyl phosphate reductase (419 aa).

Belongs to the gamma-glutamyl phosphate reductase family.

The protein resides in the cytoplasm. The enzyme catalyses L-glutamate 5-semialdehyde + phosphate + NADP(+) = L-glutamyl 5-phosphate + NADPH + H(+). It functions in the pathway amino-acid biosynthesis; L-proline biosynthesis; L-glutamate 5-semialdehyde from L-glutamate: step 2/2. Its function is as follows. Catalyzes the NADPH-dependent reduction of L-glutamate 5-phosphate into L-glutamate 5-semialdehyde and phosphate. The product spontaneously undergoes cyclization to form 1-pyrroline-5-carboxylate. The chain is Gamma-glutamyl phosphate reductase from Gloeobacter violaceus (strain ATCC 29082 / PCC 7421).